Here is a 961-residue protein sequence, read N- to C-terminus: MHGHRAPGGAGPSEPEHPATNPPGAAPPACADSDPGASEPGLLARRGSGSALGGPLDPQFVGPSDTSLGAAPGHRVLPCGPSPQHHRALRFSYHLEGSQPRPGLHQGNRILVKSLSLDPGQSLEPHPEGPQRLRSDPGPPTETPSQRPSPLKRAPGPKPQVPPKPSYLQMPRMPPPLEPIPPPPSRPLPADPRVAKGLAPRAEASPSSAAVSSLIEKFEREPVIVASDRPVPGPSPGPPEPVMLPQPTSQPPVPQLPEGEASRCLFLLAPGPRDGEKVPNRDSGIDSISSPSNSEETCFVSDDGPPSHSLCPGPPALASVPVALADPHRPGSQEVDSDLEEEDDEEEEEEKDREIPVPLMERQESVELTVQQKVFHIANELLQTEKAYVSRLHLLDQVFCARLLEEARNRSSFPADVVHGIFSNICSIYCFHQQFLLPELEKRMEEWDRYPRIGDILQKLAPFLKMYGEYVKNFDRAVELVNTWTERSTQFKVIIHEVQKEEACGNLTLQHHMLEPVQRIPRYELLLKDYLLKLPHGSPDSKDAQKSLELIATAAEHSNAAIRKMERMHKLLKVYELLGGEEDIVSPTKELIKEGHILKLSAKNGTTQDRYLILFNDRLLYCVPRLRLLGQKFSVRARIDVDGMELKESSNLNLPRTFLVSGKQRSLELQARTEEEKKDWVQAINSTLLKHEQTLETFKLLNSTNREDEDTPPNSPNVDLGKRAPTPIREKEVTMCMRCQEPFNSITKRRHHCKACGHVVCGKCSEFRARLVYDNNRSNRVCTDCYVALHGVPGSSPACSQHTPQRRRSILEKQASVAAENSVICSFLHYMEKGGKGWHKAWFVVPENEPLVLYIYGAPQDVKAQRSLPLIGFEVGPPEAGERPDRRHVFKITQSHLSWYFSPETEELQRRWMAVLGRAGRGDTFCPGPTLSEDREMEEAPVAALGATAEPPESPQTRDKT.

Positions 1-11 (MHGHRAPGGAG) are enriched in gly residues. Residues 1-353 (MHGHRAPGGA…DEEEEEEKDR (353 aa)) form a disordered region. Low complexity predominate over residues 27-38 (PPACADSDPGAS). A Phosphoserine modification is found at Ser-48. Basic and acidic residues predominate over residues 125 to 135 (PHPEGPQRLRS). 2 stretches are compositionally biased toward pro residues: residues 156–165 (GPKPQVPPKP) and 172–190 (RMPP…PLPA). The short motif at 171–187 (PRMPPPLEPIPPPPSRP) is the SH3-binding element. Residues 199–213 (APRAEASPSSAAVSS) are compositionally biased toward low complexity. The residue at position 205 (Ser-205) is a Phosphoserine. A compositionally biased stretch (pro residues) spans 231-255 (VPGPSPGPPEPVMLPQPTSQPPVPQ). The segment covering 273 to 284 (RDGEKVPNRDSG) has biased composition (basic and acidic residues). 2 stretches are compositionally biased toward low complexity: residues 285-294 (IDSISSPSNS) and 316-325 (ALASVPVALA). Positions 335 to 351 (VDSDLEEEDDEEEEEEK) are enriched in acidic residues. The DH domain occupies 373–561 (KVFHIANELL…ATAAEHSNAA (189 aa)). Residues 590 to 689 (ELIKEGHILK…WVQAINSTLL (100 aa)) form the PH 1 domain. The segment at 702–726 (NSTNREDEDTPPNSPNVDLGKRAPT) is disordered. Phosphothreonine is present on Thr-711. Position 715 is a phosphoserine (Ser-715). An FYVE-type zinc finger spans residues 730–790 (EKEVTMCMRC…VCTDCYVALH (61 aa)). Residues Cys-736, Cys-739, Cys-753, Cys-756, Cys-761, Cys-764, Cys-782, and Cys-785 each contribute to the Zn(2+) site. One can recognise a PH 2 domain in the interval 821 to 921 (NSVICSFLHY…WMAVLGRAGR (101 aa)). Positions 925-961 (FCPGPTLSEDREMEEAPVAALGATAEPPESPQTRDKT) are disordered.

Interacts with DBNL/ABP1 and CTTN. May interact with CCPG1. Binds CDC42. In terms of tissue distribution, expressed in fetal heart, brain, lung, kidney and placenta. Less expressed in liver; adult heart, brain, lung, pancreas and skeletal muscle.

The protein resides in the cytoplasm. Its subcellular location is the cell projection. It is found in the lamellipodium. The protein localises to the ruffle. It localises to the cytoskeleton. Functionally, activates CDC42, a member of the Ras-like family of Rho- and Rac proteins, by exchanging bound GDP for free GTP. Plays a role in regulating the actin cytoskeleton and cell shape. This is FYVE, RhoGEF and PH domain-containing protein 1 (FGD1) from Homo sapiens (Human).